The sequence spans 422 residues: Glycerol-3-phosphate dehydrogenase [NAD(+)] 2 (422 aa).

Residues 69 to 74, Phe157, Lys180, and Ala213 contribute to the NAD(+) site; that span reads GSGNWG. Position 180 (Lys180) interacts with substrate. The active-site Proton acceptor is the Lys273. NAD(+)-binding residues include Arg338 and Gln367. A substrate-binding site is contributed by 338–339; it reads RN.

This sequence belongs to the NAD-dependent glycerol-3-phosphate dehydrogenase family.

The enzyme catalyses sn-glycerol 3-phosphate + NAD(+) = dihydroxyacetone phosphate + NADH + H(+). The chain is Glycerol-3-phosphate dehydrogenase [NAD(+)] 2 (GPD2) from Candida glabrata (strain ATCC 2001 / BCRC 20586 / JCM 3761 / NBRC 0622 / NRRL Y-65 / CBS 138) (Yeast).